We begin with the raw amino-acid sequence, 317 residues long: MPDSRPDTELSNPQSAKAPLDPHLKALENESIHIFREVAAEFERPVMLYSIGKDSSVLLHLARKAFYPGRVPFPLLHVNTGWKFSEMIAFRDETAKKYDLDLIEHINPRGKAENITPFTHGSAAFTDIMKTEGLRQALDAGQFDAAFGGARRDEEASRAKERIYSFRTPDHRWDPRNQRPELWNIYNGMIRKGESVRAFPLSNWTEVDIWRYIQAEDIPLVPLYYAKKRPFVERDGMMILAEDPRLELLPGEVRQEGMIRFRTLGDFPLTGAIRSQATTLEEVIAELEIATVSERQGRAIDRDQSGSMEKKKREGYF.

2 disordered regions span residues 1 to 21 and 298 to 317; these read MPDS…APLD and RAID…EGYF.

It belongs to the PAPS reductase family. CysD subfamily. As to quaternary structure, heterodimer composed of CysD, the smaller subunit, and CysN.

The catalysed reaction is sulfate + ATP + H(+) = adenosine 5'-phosphosulfate + diphosphate. Its pathway is sulfur metabolism; hydrogen sulfide biosynthesis; sulfite from sulfate: step 1/3. With CysN forms the ATP sulfurylase (ATPS) that catalyzes the adenylation of sulfate producing adenosine 5'-phosphosulfate (APS) and diphosphate, the first enzymatic step in sulfur assimilation pathway. APS synthesis involves the formation of a high-energy phosphoric-sulfuric acid anhydride bond driven by GTP hydrolysis by CysN coupled to ATP hydrolysis by CysD. This Rhizobium johnstonii (strain DSM 114642 / LMG 32736 / 3841) (Rhizobium leguminosarum bv. viciae) protein is Sulfate adenylyltransferase subunit 2.